Consider the following 143-residue polypeptide: Hemoglobin subunit alpha (143 aa).

The residue at position 2 (serine 2) is an N-acetylserine. The region spanning 2–143 (SLSDKDKSAV…VALALAEKYR (142 aa)) is the Globin domain. Histidine 60 contacts O2. Histidine 89 provides a ligand contact to heme b.

The protein belongs to the globin family. As to quaternary structure, heterotetramer of two alpha chains and two beta chains. As to expression, red blood cells.

Its function is as follows. Involved in oxygen transport from gills to the various peripheral tissues. This chain is Hemoglobin subunit alpha (hba), found in Pogonophryne scotti (Saddleback plunderfish).